We begin with the raw amino-acid sequence, 101 residues long: uncharacterized protein (101 aa).

The span at 65 to 79 (QEAAAPAGPQEPAEA) shows a compositional bias: low complexity. The tract at residues 65–101 (QEAAAPAGPQEPAEASGDAGKKEEVEEEEIEIDFGMF) is disordered. Positions 89 to 101 (VEEEEIEIDFGMF) are enriched in acidic residues.

This is an uncharacterized protein from Encephalitozoon cuniculi (strain GB-M1) (Microsporidian parasite).